Reading from the N-terminus, the 317-residue chain is HTH-type transcriptional regulator CfxR (317 aa).

An HTH lysR-type domain is found at 8–65 (LTLRQLQIFVTVARHASFVRAAEELHLTQPAVSMQVKQLESVVGMALFERVKGQLTLT). Positions 25 to 44 (FVRAAEELHLTQPAVSMQVK) form a DNA-binding region, H-T-H motif.

The protein belongs to the LysR transcriptional regulatory family.

Functionally, trans-acting transcriptional regulator of RuBisCO genes (cfxLS) expression. This chain is HTH-type transcriptional regulator CfxR (cfxR), found in Cupriavidus necator (strain ATCC 17699 / DSM 428 / KCTC 22496 / NCIMB 10442 / H16 / Stanier 337) (Ralstonia eutropha).